Consider the following 732-residue polypeptide: 1,4-alpha-glucan branching enzyme GlgB 1 (732 aa).

Asp-411 functions as the Nucleophile in the catalytic mechanism. The active-site Proton donor is Glu-464.

The protein belongs to the glycosyl hydrolase 13 family. GlgB subfamily. As to quaternary structure, monomer.

The enzyme catalyses Transfers a segment of a (1-&gt;4)-alpha-D-glucan chain to a primary hydroxy group in a similar glucan chain.. The protein operates within glycan biosynthesis; glycogen biosynthesis. In terms of biological role, catalyzes the formation of the alpha-1,6-glucosidic linkages in glycogen by scission of a 1,4-alpha-linked oligosaccharide from growing alpha-1,4-glucan chains and the subsequent attachment of the oligosaccharide to the alpha-1,6 position. The polypeptide is 1,4-alpha-glucan branching enzyme GlgB 1 (Xanthomonas oryzae pv. oryzae (strain KACC10331 / KXO85)).